The chain runs to 590 residues: Potassium-transporting ATPase potassium-binding subunit (590 aa).

10 consecutive transmembrane segments (helical) span residues 11–31 (IFIAAVLLGAKPLGVYMAAVF), 64–84 (TAYCASMLIFSAATMLLTYLI), 136–156 (GLATHNFWSAAVGIALAIAFI), 178–198 (ILWVLLPICVVFALVLTSQGV), 273–293 (MLEMISIFLIPAGLTVTLGQM), 301–321 (WAVLGAMLILWFAGVATCYWA), 403–423 (AGLYGMLVFVIVAVFIAGLMV), 442–462 (AMLYLLIFPLIILGFSAVAVL), 511–531 (LGFAMFIGRFLMIVPMLALAG), and 552–572 (LFTVLLTSVIIVVGALTFLPA).

Belongs to the KdpA family. In terms of assembly, the system is composed of three essential subunits: KdpA, KdpB and KdpC.

The protein localises to the cell inner membrane. Part of the high-affinity ATP-driven potassium transport (or Kdp) system, which catalyzes the hydrolysis of ATP coupled with the electrogenic transport of potassium into the cytoplasm. This subunit binds the periplasmic potassium ions and delivers the ions to the membrane domain of KdpB through an intramembrane tunnel. The protein is Potassium-transporting ATPase potassium-binding subunit of Acidobacterium capsulatum (strain ATCC 51196 / DSM 11244 / BCRC 80197 / JCM 7670 / NBRC 15755 / NCIMB 13165 / 161).